Consider the following 319-residue polypeptide: Taste receptor type 2 member 14 (319 aa).

Topologically, residues 1–7 (MDGVIKS) are extracellular. A helical membrane pass occupies residues 8 to 28 (IFTFILILEFIIGNLGNSFIV). Residues 29–55 (LVNCIDWVKRRKISLVDQLLIALAISR) are Cytoplasmic-facing. Residues 56 to 76 (ISLVWSIFGSWCVSVVFPALF) form a helical membrane-spanning segment. Over 77–87 (ATEKLLRMLTN) the chain is Extracellular. Cholesterol contacts are provided by threonine 86 and tryptophan 89. A helical transmembrane segment spans residues 88 to 108 (IWTVTNHFSVWLATILGTFYF). Residues 109 to 129 (LKIANFSNSIFLYLKWRVKKV) lie on the Cytoplasmic side of the membrane. Residues 130 to 150 (VLVLLLVTLVLLFLNILLINI) form a helical membrane-spanning segment. The Extracellular portion of the chain corresponds to 151–184 (HINASINGYRGNMTCSSASCNFIRFSSAIALTST). Asparagine 153 and asparagine 162 each carry an N-linked (GlcNAc...) asparagine glycan. Alanine 180 contributes to the cholesterol binding site. Residues 185–205 (VFILIPFTLSLATFLLLSFSL) form a helical membrane-spanning segment. Residues 206–232 (WKHRKKMQHTVKGYRDVSTKAHRGVMQ) lie on the Cytoplasmic side of the membrane. A helical transmembrane segment spans residues 233-253 (TVITFLLLYAVFFLTFFVSIW). The Extracellular segment spans residues 254 to 261 (ISERLKEN). The chain crosses the membrane as a helical span at residues 262–282 (QIIILSEMMGLAYPSGHSCVL). The cholesterol site is built by isoleucine 265 and glutamate 268. Topologically, residues 283 to 317 (ILGNKKLRQASLSVLWWLRYRFKDGELSGHKEFRE) are cytoplasmic.

The protein belongs to the G-protein coupled receptor T2R family. As to quaternary structure, core component of the TAS2R14-GNAI1 complex, consisting of TAS2R14, GNAI1, GNB1 and GNG2; within the complex interacts with GNAI1. Core component of the TAS2R14-GNAT3 complex, consisting of TAS2R14, GNAT3, GNB1 and GNG2; within the complex interacts with GNAT3. Core component of the TAS2R14-GNAS2 complex, consisting of TAS2R14, GNAS2, GNB1 and GNG2; within the complex interacts with GNAS2.

It localises to the membrane. It catalyses the reaction Ca(2+)(in) = Ca(2+)(out). It carries out the reaction 3',5'-cyclic AMP(in) = 3',5'-cyclic AMP(out). With respect to regulation, basal activity is enhanced by binding to bitter tastants, such as flufenamic acid and aristolochic acid. Regulated by cholesterol in a concentration-dependent manner. Gustducin-linked G-protein coupled receptor that plays a role in the perception of bitterness. The activity of this receptor stimulates GNAT3, activating the gustducin G-protein pathway. Likely plays a role in sensing the chemical composition of the gastrointestinal content and other extra-oral tissues via the inhibitory G-protein pathways. This chain is Taste receptor type 2 member 14 (TAS2R14), found in Papio hamadryas (Hamadryas baboon).